The following is a 168-amino-acid chain: MIDLGISKLALIGAVALIVIGPERLPKVARTVGALVGRAQRYINDVKAEVSREVELEELRKMRTEFENAARDVEQTIHKEVSEHTQALNEAFDGSASSSSSSDTGSGYVPSWDSAHKSHNGRKSWRVKQGARPIWFKRQQNTRMWVQSGAARVKRHRPASGRNRSFFE.

Residues 1–21 (MIDLGISKLALIGAVALIVIG) traverse the membrane as a helical segment. 2 disordered regions span residues 92 to 132 (FDGS…QGAR) and 146 to 168 (VQSGAARVKRHRPASGRNRSFFE). A compositionally biased stretch (low complexity) spans 94 to 107 (GSASSSSSSDTGSG). Residues 117–126 (KSHNGRKSWR) are compositionally biased toward basic residues.

The protein belongs to the TatB family. The Tat system comprises two distinct complexes: a TatABC complex, containing multiple copies of TatA, TatB and TatC subunits, and a separate TatA complex, containing only TatA subunits. Substrates initially bind to the TatABC complex, which probably triggers association of the separate TatA complex to form the active translocon.

The protein localises to the cell inner membrane. In terms of biological role, part of the twin-arginine translocation (Tat) system that transports large folded proteins containing a characteristic twin-arginine motif in their signal peptide across membranes. Together with TatC, TatB is part of a receptor directly interacting with Tat signal peptides. TatB may form an oligomeric binding site that transiently accommodates folded Tat precursor proteins before their translocation. The polypeptide is Sec-independent protein translocase protein TatB (Cupriavidus metallidurans (strain ATCC 43123 / DSM 2839 / NBRC 102507 / CH34) (Ralstonia metallidurans)).